The sequence spans 192 residues: MATEIDINRIQKDIFIEHKGEPYRVLDYEHVKPGKGQAFVRVKAKNMLTGNVTELTFKASDRIPLADFEQVYATYSYNDGENYYFMNTQTYDMIAVPKEKIEEEAKFLKEGMEVIVFLYKGQPIGIELPKHVELQVVETEPAFKGDTQAGGTKPAKLETGAVIQVPFFVKEGDIVKVDTRTGSYVERVKEAK.

It belongs to the elongation factor P family.

The protein localises to the cytoplasm. Its pathway is protein biosynthesis; polypeptide chain elongation. Functionally, involved in peptide bond synthesis. Stimulates efficient translation and peptide-bond synthesis on native or reconstituted 70S ribosomes in vitro. Probably functions indirectly by altering the affinity of the ribosome for aminoacyl-tRNA, thus increasing their reactivity as acceptors for peptidyl transferase. The chain is Elongation factor P (efp) from Aquifex aeolicus (strain VF5).